We begin with the raw amino-acid sequence, 75 residues long: Small ribosomal subunit protein bS18 (75 aa).

The protein belongs to the bacterial ribosomal protein bS18 family. Part of the 30S ribosomal subunit. Forms a tight heterodimer with protein bS6.

Its function is as follows. Binds as a heterodimer with protein bS6 to the central domain of the 16S rRNA, where it helps stabilize the platform of the 30S subunit. In Saccharophagus degradans (strain 2-40 / ATCC 43961 / DSM 17024), this protein is Small ribosomal subunit protein bS18.